The chain runs to 715 residues: MPAESGKRFKPSKYVPVSAAAIFLVGATTLFFAFTCPGLSLYVSPAVPIYNAIMFLFVLANFSMATFMDPGIFPRAEEDEDKEDDFRAPLYKTVEIKGIQVRMKWCATCRFYRPPRCSHCSVCDNCVEEFDHHCPWVNNCIGRRNYRYFFLFLLSLTAHIMGVFGFGLLYVLYHIEELSGVRTAVTMAVMCVAGLFFIPVAGLTGFHVVLVARGRTTNEQVTGKFRGGVNPFTNGCCNNVSRVLCSSPAPRYLGRPKKEKTIVIRPPFLRPEVSDGQITVKIMDNGIQGELRRTKSKGSLEITESQSADAEPPPPPKPDLSRYTGLRTHLGLATNEDSSLLAKDSPPTPTMYKYRPGYSSSSTSAAMPHSSSAKLSRGDSLKEPTSIAESSRHPSYRSEPSLEPESFRSPTFGKSFHFDPLSSGSRSSSLKSAQGTGFELGQLQSIRSEGTTSTSYKSLANQTRNGSLSYDSLLTPSDSPDFESVQAGPEPDPPLGYTSPFLSARLAQQREAERHPRLVPTGPTHREPSPVRYDNLSRHIVASLQEREKLLRQSPPLPVREEEPGLGDSGIQSTPGSGHAPRTSSSSDDSKRSPLGKTPLGRPAVPRFGKPDGLRGRGVGSPEPGPTAPYLGRSMSYSSQKAQPGVSETEEVALQPLLTPKDEVQLKTTYSKSNGQPKSLGSASPGPGQPPLSSPTRGGVKKVSGVGGTTYEISV.

Residues Met1 to Lys13 lie on the Cytoplasmic side of the membrane. A helical transmembrane segment spans residues Tyr14–Phe34. Residues Thr35–Gly38 are Extracellular-facing. A helical membrane pass occupies residues Leu39–Leu59. At Ala60–Tyr148 the chain is on the cytoplasmic side. Tyr91 bears the Phosphotyrosine mark. Positions Lys104–Leu154 constitute a DHHC domain. Residue Cys134 is the S-palmitoyl cysteine intermediate of the active site. The helical transmembrane segment at Phe149–Leu169 threads the bilayer. Residues Tyr170–Cys191 are Extracellular-facing. A helical membrane pass occupies residues Val192–Ala212. Residues Arg213–Val715 are Cytoplasmic-facing. At Ser247 the chain carries Phosphoserine. Positions Gly289 to Val715 are disordered. Thr294 bears the Phosphothreonine mark. 2 positions are modified to phosphoserine: Ser296 and Ser299. Thr303 carries the phosphothreonine modification. Phosphoserine is present on Ser345. Thr348 and Thr350 each carry phosphothreonine. Residues Ser359–Ala373 are compositionally biased toward low complexity. Phosphoserine occurs at positions 380, 398, 406, and 409. A Phosphothreonine modification is found at Thr411. A phosphoserine mark is found at Ser415, Ser425, Ser429, and Ser432. A compositionally biased stretch (low complexity) spans Ser422 to Ser432. Thr436 bears the Phosphothreonine mark. Polar residues predominate over residues Gln442–Asp478. A phosphoserine mark is found at Ser529 and Ser554. Arg617 carries the post-translational modification Omega-N-methylarginine. Ser621 carries the post-translational modification Phosphoserine. Position 659 is a phosphothreonine (Thr659). Residues Leu666–Pro677 are compositionally biased toward polar residues. Phosphoserine is present on residues Ser684 and Ser694. Arg697 is modified (omega-N-methylarginine).

The protein belongs to the DHHC palmitoyltransferase family. ERF2/ZDHHC9 subfamily.

The protein localises to the cell membrane. It carries out the reaction L-cysteinyl-[protein] + hexadecanoyl-CoA = S-hexadecanoyl-L-cysteinyl-[protein] + CoA. Palmitoyltransferase that catalyzes the addition of palmitate onto various protein substrates such as CTNND2, CD36, GSDMD, NLRP3, NOD1, NOD2, STAT3 and S1PR1 thus plays a role in various biological processes including cell adhesion, inflammation, fatty acid uptake, bacterial sensing or cardiac functions. Plays an important role in the regulation of synapse efficacy by mediating palmitoylation of delta-catenin/CTNND2, thereby increasing synaptic delivery and surface stabilization of alpha-amino-3-hydroxy-5-methyl-4-isoxazole propionic acid receptors (AMPARs). Under basal conditions, remains at the synaptic membrane through FYN-mediated phosphorylation that prevents association with endocytic proteins. Neuronal activity enhances the internalization and trafficking of DHHC5 from spines to dendritic shafts where it palmitoylates delta-catenin/CTNND2. Regulates cell adhesion at the plasma membrane by palmitoylating GOLGA7B and DSG2. Plays a role in innate immune response by mediating the palmitoylation of NOD1 and NOD2 and their proper recruitment to the bacterial entry site and phagosomes. Also participates in fatty acid uptake by palmitoylating CD36 and thereby targeting it to the plasma membrane. Upon binding of fatty acids to CD36, gets phosphorylated by LYN leading to inactivation and subsequent CD36 caveolar endocytosis. Controls oligodendrocyte development by catalyzing STAT3 palmitoylation. Acts as a regulator of inflammatory response by mediating palmitoylation of NLRP3 and GSDMD. Palmitoylates NLRP3 to promote inflammasome assembly and activation. Activates pyroptosis by catalyzing palmitoylation of gasdermin-D (GSDMD), thereby promoting membrane translocation and pore formation of GSDMD. The sequence is that of Palmitoyltransferase ZDHHC5 (ZDHHC5) from Pan troglodytes (Chimpanzee).